Here is a 102-residue protein sequence, read N- to C-terminus: MAKIGNIEHVEERVESELMPPSMYKVVLNNDDYTPMDFVIEVLQVFFRKNEQEATDIMLTIHHQGKGICGIFPFGIAETKVIQVNQFARQNQHPLLCSLEKA.

Belongs to the ClpS family. Binds to the N-terminal domain of the chaperone ClpA.

In terms of biological role, involved in the modulation of the specificity of the ClpAP-mediated ATP-dependent protein degradation. The chain is ATP-dependent Clp protease adapter protein ClpS from Shewanella baltica (strain OS155 / ATCC BAA-1091).